The following is a 140-amino-acid chain: Respiratory supercomplex factor 1, mitochondrial (140 aa).

An HIG1 domain is found at 1–79 (MNTLQKIAYR…KESAEQKQTR (79 aa)). 2 helical membrane-spanning segments follow: residues 16–32 (LVPLGTLLTTAAVVLAA) and 46–68 (YFRYRVGFQAFTLVALVIGGMYY). Positions 68–126 (YQKESAEQKQTREDKLREKAKLREQLWIEELERRDQLIKARKQRLEESKKELMKVAQEG) form a coiled coil.

Belongs to the RCF1 family. In terms of assembly, associates with the respiratory chain complex III/complex IV supercomplex.

The protein resides in the mitochondrion membrane. Cytochrome c oxidase subunit which plays a role in assembly of respiratory supercomplexes. This Clavispora lusitaniae (strain ATCC 42720) (Yeast) protein is Respiratory supercomplex factor 1, mitochondrial (RCF1).